Consider the following 1571-residue polypeptide: Phosphatidylinositol 3-kinase 1 (1571 aa).

The span at 1–73 (MNSIESSSND…NNDNNNNNNN (73 aa)) shows a compositional bias: low complexity. Disordered regions lie at residues 1 to 119 (MNSI…HVNN), 157 to 195 (GYDVNSNNNNNNGGGSSSGSSSGGSDESASNQPIIRTRN), and 283 to 430 (NSKL…IIKR). Basic and acidic residues predominate over residues 74–85 (IDKKRKDSKNKQ). A compositionally biased stretch (low complexity) spans 101–119 (NSNDSNCSSGSSSGGHVNN). Positions 283 to 292 (NSKLDTEEKP) are enriched in basic and acidic residues. The span at 294-324 (TTTTTTTTTSTSISTSTPTTTTTTTTNTSTT) shows a compositional bias: low complexity. A compositionally biased stretch (polar residues) spans 325-337 (NDITIKPKTSPTK). Composition is skewed to low complexity over residues 360–382 (KVSTPKSNNTSKKTSSDTTPTGK) and 405–424 (NNTNNTSSNNNNNNNNNNNN). Residues 530-627 (IKTSFNILFL…IPKLKVIEKS (98 aa)) enclose the PI3K-ABD domain. Positions 700–789 (GNKILISIFL…GTKPQLTLIQ (90 aa)) constitute a PI3K-RBD domain. Residues 851–1020 (IKKPFRVKVM…GLTLEFEEFN (170 aa)) form the C2 PI3K-type domain. A PIK helical domain is found at 1040–1216 (QPPTNINSNE…GILLESYLYA (177 aa)). Residues 1280–1558 (IINKSKYMDS…LIHESLATKT (279 aa)) enclose the PI3K/PI4K catalytic domain. Residues 1286–1292 (YMDSKKL) form a G-loop region. The tract at residues 1424-1432 (GIGDRHNDN) is catalytic loop. Residues 1443–1469 (HIDFGHFLGNYKKKFGFKRERAPFVFT) form an activation loop region.

The protein belongs to the PI3/PI4-kinase family.

The catalysed reaction is a 1,2-diacyl-sn-glycero-3-phospho-(1D-myo-inositol) + ATP = a 1,2-diacyl-sn-glycero-3-phospho-(1D-myo-inositol-3-phosphate) + ADP + H(+). This is Phosphatidylinositol 3-kinase 1 (pikA) from Dictyostelium discoideum (Social amoeba).